The following is a 115-amino-acid chain: NAD(P)H-quinone oxidoreductase subunit M (115 aa).

This sequence belongs to the complex I NdhM subunit family. In terms of assembly, NDH-1 can be composed of about 15 different subunits; different subcomplexes with different compositions have been identified which probably have different functions.

It is found in the cellular thylakoid membrane. The catalysed reaction is a plastoquinone + NADH + (n+1) H(+)(in) = a plastoquinol + NAD(+) + n H(+)(out). It carries out the reaction a plastoquinone + NADPH + (n+1) H(+)(in) = a plastoquinol + NADP(+) + n H(+)(out). Its function is as follows. NDH-1 shuttles electrons from an unknown electron donor, via FMN and iron-sulfur (Fe-S) centers, to quinones in the respiratory and/or the photosynthetic chain. The immediate electron acceptor for the enzyme in this species is believed to be plastoquinone. Couples the redox reaction to proton translocation, and thus conserves the redox energy in a proton gradient. Cyanobacterial NDH-1 also plays a role in inorganic carbon-concentration. The chain is NAD(P)H-quinone oxidoreductase subunit M from Prochlorococcus marinus (strain MIT 9515).